Reading from the N-terminus, the 472-residue chain is Replicative helicase loading/DNA remodeling protein DnaB (472 aa).

Positions 1-112 (MADYWKDVLP…ERLFIYELLP (112 aa)) are DDBH1. Residues 210 to 302 (DLFLAGLSET…VHLREGEQPA (93 aa)) form a DDBH2-1 region. A DDBH2-2 region spans residues 303 to 411 (EEDSLDGKLI…RQYLEWAEGK (109 aa)). A disordered region spans residues 415 to 472 (SKRNQKVIREEKLPDWMTEKETASDSESGQQKLHPQDLEEQKKKMMEEMQKLKKYSAY). 2 stretches are compositionally biased toward basic and acidic residues: residues 421–437 (VIREEKLPDWMTEKETA) and 448–465 (HPQDLEEQKKKMMEEMQK).

This sequence belongs to the DnaB/DnaD family. As to quaternary structure, homotetramer. Also forms higher-order oligomers, can be induced by some ssDNA. The DNA replisome assembles sequentially on oriC in this order; DnaA, DnaD, DnaB, DnaI-DnaC helicase. In atomic force microscopy forms a square with a small central hole. Part of the replication restart primosome which assembles in this order; PriA, DnaD then DnaB. The preferred DNA substrate mimics an arrested DNA replication fork with unreplicated lagging strand. Interacts with DnaC, but probably not as a tetramer. Interacts with DnaD but no interaction with PriA was seen. Interacts with cell cycle regulator CcrZ. In early growth phase only full-length protein is detected, during late growth and stationary phase full-length and C-terminally truncated proteins are seen (at protein level). Truncated protein is only seen in cytoplasmic fractions.

The protein localises to the cytoplasm. The protein resides in the cell membrane. Its function is as follows. Helps DnaI load the DnaC replicative helicase onto single-stranded (ss)DNA. During DNA replication from the origin of replication (oriC) in the DNA replisome, DnaD is required after DnaA, before DnaB and before subsequent helicase DnaC loading. Component of the replication restart primosome, which reloads the replicative helicase on sites other than oriC. DnaB, DnaD and DnaI may also be required for a PriA-independent pathway of replication fork restart. DnaB and DnaD work together to allow DnaB access to ssDNA. DNA replication at oriC might originate on the inner face of the cell membrane; DnaB is essential for both replication initiation and cell membrane attachment of the origin region of the chromosome and plasmids. Weakly binds ssDNA, preferentially binds double-stranded (ds)DNA, and replication fork-like substrates. Remodels DNA, laterally compacts supercoiled plasmid and linear DNA, forms beads along the dsDNA. Together DnaB and DnaD form bipolar complexes on plasmid DNA. DnaB and DnaD are also required to load helicase on the repN plasmid origin of replication (oriN). The chain is Replicative helicase loading/DNA remodeling protein DnaB from Bacillus subtilis (strain 168).